We begin with the raw amino-acid sequence, 745 residues long: Cytoskeleton-associated protein 2-like (745 aa).

The tract at residues 25–141 is disordered; it reads AKGKLKSQNT…GELSRKPVGS (117 aa). A compositionally biased stretch (polar residues) spans 30–61; the sequence is KSQNTKPYLKSKNNCQNQPPSKSTIRPKNDVT. Low complexity predominate over residues 109-120; it reads SSNPYSKPSSKS. A compositionally biased stretch (polar residues) spans 121–133; sequence FQQCEAGSSTTGE. Positions 185 to 187 match the KEN box motif; the sequence is KEN. Over residues 192-203 the composition is skewed to basic and acidic residues; it reads LTEPERKPDPKL. 3 disordered regions span residues 192–217, 256–276, and 385–411; these read LTEP…YNQT, VKSQ…KPSR, and RFNS…NNGF. Residue lysine 198 forms a Glycyl lysine isopeptide (Lys-Gly) (interchain with G-Cter in SUMO1); alternate linkage. A Glycyl lysine isopeptide (Lys-Gly) (interchain with G-Cter in SUMO2); alternate cross-link involves residue lysine 198. Position 204 is a phosphotyrosine (tyrosine 204). The span at 389 to 411 shows a compositional bias: polar residues; the sequence is AIPSTPSIRPNGTSGNKHNNNGF. Threonine 742 bears the Phosphothreonine mark. At serine 745 the chain carries Phosphoserine.

The protein belongs to the CKAP2 family. Post-translationally, ubiquitinated by the anaphase promoting complex/cyclosome (APC/C).

Its subcellular location is the cytoplasm. It is found in the cytoskeleton. The protein localises to the spindle pole. Microtubule-associated protein required for mitotic spindle formation and cell-cycle progression in neural progenitor cells. This is Cytoskeleton-associated protein 2-like (CKAP2L) from Homo sapiens (Human).